The primary structure comprises 150 residues: Anti-sigma F factor (150 aa).

This sequence belongs to the anti-sigma-factor family.

The enzyme catalyses L-seryl-[protein] + ATP = O-phospho-L-seryl-[protein] + ADP + H(+). It carries out the reaction L-threonyl-[protein] + ATP = O-phospho-L-threonyl-[protein] + ADP + H(+). Functionally, binds to sigma F and blocks its ability to form an RNA polymerase holoenzyme (E-sigma F). Phosphorylates SpoIIAA on a serine residue. This phosphorylation may enable SpoIIAA to act as an anti-anti-sigma factor that counteracts SpoIIAB and thus releases sigma F from inhibition. The protein is Anti-sigma F factor of Pasteuria penetrans.